The following is a 555-amino-acid chain: Alpha-copaene synthase (555 aa).

Residues D312, D316, D452, S456, and E460 each contribute to the Mg(2+) site. The DDXXD motif signature appears at 312 to 316; that stretch reads DDTYD.

This sequence belongs to the terpene synthase family. The cofactor is Mg(2+). As to expression, mainly expressed in sunflower trichomes.

It carries out the reaction (2E,6E)-farnesyl diphosphate = alpha-copaene + diphosphate. It catalyses the reaction (2E,6E)-farnesyl diphosphate = alpha-muurolene + diphosphate. The enzyme catalyses (2E,6E)-farnesyl diphosphate = alpha-humulene + diphosphate. It functions in the pathway secondary metabolite biosynthesis; terpenoid biosynthesis. Involved in the biosynthesis of germacrene-derived sesquiterpene lactones. Catalyzes the cyclization of farnesyl diphosphate to alpha-copaene, delta-cadinene, alpha-muurolene, beta-caryophyllene and alpha-humulene. The polypeptide is Alpha-copaene synthase (CS) (Helianthus annuus (Common sunflower)).